Here is a 190-residue protein sequence, read N- to C-terminus: MGVKIDINRIARDQFILVDNQPYKVVSYEHVKPGKGQAFVRVKAKNMRTGNVTEFTFKSSDSIELADFEQRFMNYSYTDGTYYYFLDTNTYETFAVPAEAMEHEAQFLKEGMQVVVFLDRGNPIGIELPKHEVYEVIETEPGFKGDTATNTLKPAKIETGATVQVPLFINVGDRIKVDTEKGTYIERVNK.

Belongs to the elongation factor P family.

The protein resides in the cytoplasm. It functions in the pathway protein biosynthesis; polypeptide chain elongation. Involved in peptide bond synthesis. Stimulates efficient translation and peptide-bond synthesis on native or reconstituted 70S ribosomes in vitro. Probably functions indirectly by altering the affinity of the ribosome for aminoacyl-tRNA, thus increasing their reactivity as acceptors for peptidyl transferase. The chain is Elongation factor P from Sulfurihydrogenibium sp. (strain YO3AOP1).